The chain runs to 421 residues: Imidazolonepropionase (421 aa).

Positions 81 and 83 each coordinate Fe(3+). 2 residues coordinate Zn(2+): His81 and His83. Residues Arg90, Tyr153, and His186 each contribute to the 4-imidazolone-5-propanoate site. N-formimidoyl-L-glutamate is bound at residue Tyr153. His251 is a binding site for Fe(3+). His251 contacts Zn(2+). Glu254 lines the 4-imidazolone-5-propanoate pocket. Position 326 (Asp326) interacts with Fe(3+). Asp326 is a Zn(2+) binding site. The N-formimidoyl-L-glutamate site is built by Asn328 and Gly330. Position 331 (Ser331) interacts with 4-imidazolone-5-propanoate.

It belongs to the metallo-dependent hydrolases superfamily. HutI family. It depends on Zn(2+) as a cofactor. Requires Fe(3+) as cofactor.

The protein resides in the cytoplasm. The catalysed reaction is 4-imidazolone-5-propanoate + H2O = N-formimidoyl-L-glutamate. It functions in the pathway amino-acid degradation; L-histidine degradation into L-glutamate; N-formimidoyl-L-glutamate from L-histidine: step 3/3. In terms of biological role, catalyzes the hydrolytic cleavage of the carbon-nitrogen bond in imidazolone-5-propanoate to yield N-formimidoyl-L-glutamate. It is the third step in the universal histidine degradation pathway. The polypeptide is Imidazolonepropionase (Streptococcus pyogenes serotype M12 (strain MGAS2096)).